The chain runs to 329 residues: uncharacterized protein (329 aa).

The segment at 1 to 20 is disordered; it reads MGESTTQPAGGAAVDDETRS.

This is an uncharacterized protein from Mycobacterium tuberculosis (strain CDC 1551 / Oshkosh).